The following is a 400-amino-acid chain: Serpin E3 (400 aa).

An N-terminal signal peptide occupies residues 1–19 (MQSLLLALLLLPVCSPGGA). Asn46 is a glycosylation site (N-linked (GlcNAc...) asparagine).

It belongs to the serpin family.

The protein localises to the secreted. Its function is as follows. Probable serine protease inhibitor. This is Serpin E3 (SERPINE3) from Bos taurus (Bovine).